Consider the following 477-residue polypeptide: MKVTLPEFERAGVMVVGDVMLDRYWYGPTSRISPEAPVPVVKVNTIEERPGGAANVAMNIASLGANARLVGLTGIDDAARALSKSLADVNVKCDFVSVPTHPTITKLRVLSRNQQLIRLDFEEGFEGVDPQPMHERINQALSSIGALVLSDYAKGALASVQQMIQLARKAGVPVLIDPKGTDFERYRGATLLTPNLSEFEAVVGKCKTEEEIVERGMKLIADYELSALLVTRSEQGMSLLQPGKAPLHMPTQAQEVYDVTGAGDTVIGVLAATLAAGNSLEEACFFANAAAGVVVGKLGTSTVSPIELENAVRGRADTGFGVMTEEELKLAVAAARKRGEKVVMTNGVFDILHAGHVFYLANARKLGDRLIVAVNSDASTKRLKGDSRPVNPLEQRMIVLGALEAVDWVVSFEEDTPQRLIAGILPDLLVKGGDYKPEEIAGSKEVWANGGEVLVLNFEDGCSTTNIIKKIQQDKKG.

Residues 1–318 (MKVTLPEFER…ENAVRGRADT (318 aa)) form a ribokinase region. Lys179 is subject to N6-acetyllysine. 195 to 198 (NLSE) provides a ligand contact to ATP. Asp264 is an active-site residue. The segment at 344 to 477 (MTNGVFDILH…IKKIQQDKKG (134 aa)) is cytidylyltransferase.

This sequence in the N-terminal section; belongs to the carbohydrate kinase PfkB family. It in the C-terminal section; belongs to the cytidylyltransferase family. In terms of assembly, homodimer.

The catalysed reaction is D-glycero-beta-D-manno-heptose 7-phosphate + ATP = D-glycero-beta-D-manno-heptose 1,7-bisphosphate + ADP + H(+). It catalyses the reaction D-glycero-beta-D-manno-heptose 1-phosphate + ATP + H(+) = ADP-D-glycero-beta-D-manno-heptose + diphosphate. The protein operates within nucleotide-sugar biosynthesis; ADP-L-glycero-beta-D-manno-heptose biosynthesis; ADP-L-glycero-beta-D-manno-heptose from D-glycero-beta-D-manno-heptose 7-phosphate: step 1/4. Its pathway is nucleotide-sugar biosynthesis; ADP-L-glycero-beta-D-manno-heptose biosynthesis; ADP-L-glycero-beta-D-manno-heptose from D-glycero-beta-D-manno-heptose 7-phosphate: step 3/4. It participates in bacterial outer membrane biogenesis; LPS core biosynthesis. In terms of biological role, catalyzes the phosphorylation of D-glycero-D-manno-heptose 7-phosphate at the C-1 position to selectively form D-glycero-beta-D-manno-heptose-1,7-bisphosphate. Its function is as follows. Catalyzes the ADP transfer from ATP to D-glycero-beta-D-manno-heptose 1-phosphate, yielding ADP-D-glycero-beta-D-manno-heptose. This is Bifunctional protein HldE from Shigella flexneri.